Consider the following 442-residue polypeptide: Histidine--tRNA ligase (442 aa).

It belongs to the class-II aminoacyl-tRNA synthetase family. As to quaternary structure, homodimer.

It localises to the cytoplasm. It catalyses the reaction tRNA(His) + L-histidine + ATP = L-histidyl-tRNA(His) + AMP + diphosphate + H(+). This chain is Histidine--tRNA ligase, found in Helicobacter pylori (strain P12).